A 95-amino-acid polypeptide reads, in one-letter code: PIK3R3 upstream open reading frame protein (95 aa).

A disordered region spans residues 1 to 27; the sequence is MGPSRLVRGPRPQGMRSPYRRPGMGWP.

The protein is PIK3R3 upstream open reading frame protein of Homo sapiens (Human).